We begin with the raw amino-acid sequence, 188 residues long: Small ribosomal subunit protein uS7 (188 aa).

It belongs to the universal ribosomal protein uS7 family. Part of the 30S ribosomal subunit.

Functionally, one of the primary rRNA binding proteins, it binds directly to 16S rRNA where it nucleates assembly of the head domain of the 30S subunit. Is located at the subunit interface close to the decoding center. In Methanococcus aeolicus (strain ATCC BAA-1280 / DSM 17508 / OCM 812 / Nankai-3), this protein is Small ribosomal subunit protein uS7.